The primary structure comprises 383 residues: tRNA-specific 2-thiouridylase MnmA (383 aa).

ATP is bound by residues Gly-29–Ser-36 and Met-55. Residues Asn-115–Asp-117 are interaction with target base in tRNA. The active-site Nucleophile is the Cys-120. A disulfide bridge links Cys-120 with Cys-217. Gly-145 lines the ATP pocket. The interaction with tRNA stretch occupies residues Lys-167 to Gln-169. The active-site Cysteine persulfide intermediate is Cys-217. Residues Arg-329 to Tyr-330 are interaction with tRNA.

Belongs to the MnmA/TRMU family.

It is found in the cytoplasm. The catalysed reaction is S-sulfanyl-L-cysteinyl-[protein] + uridine(34) in tRNA + AH2 + ATP = 2-thiouridine(34) in tRNA + L-cysteinyl-[protein] + A + AMP + diphosphate + H(+). Catalyzes the 2-thiolation of uridine at the wobble position (U34) of tRNA, leading to the formation of s(2)U34. In Histophilus somni (strain 129Pt) (Haemophilus somnus), this protein is tRNA-specific 2-thiouridylase MnmA.